The chain runs to 130 residues: Small ribosomal subunit protein uS8 (130 aa).

It belongs to the universal ribosomal protein uS8 family. As to quaternary structure, component of the 40S ribosomal subunit. Part of the small subunit (SSU) processome, composed of more than 70 proteins and the RNA chaperone small nucleolar RNA (snoRNA) U3.

It localises to the cytoplasm. It is found in the nucleus. The protein localises to the nucleolus. Component of the small ribosomal subunit. Part of the small subunit (SSU) processome, first precursor of the small eukaryotic ribosomal subunit. During the assembly of the SSU processome in the nucleolus, many ribosome biogenesis factors, an RNA chaperone and ribosomal proteins associate with the nascent pre-rRNA and work in concert to generate RNA folding, modifications, rearrangements and cleavage as well as targeted degradation of pre-ribosomal RNA by the RNA exosome. Required for erythropoiesis during embryonic development. In Danio rerio (Zebrafish), this protein is Small ribosomal subunit protein uS8.